A 221-amino-acid chain; its full sequence is Guanylate kinase (221 aa).

The 179-residue stretch at 18–196 (GFLFILSSPS…SASLIKSIYL (179 aa)) folds into the Guanylate kinase-like domain. Residue 25-32 (SPSGAGKS) coordinates ATP.

This sequence belongs to the guanylate kinase family.

It is found in the cytoplasm. It catalyses the reaction GMP + ATP = GDP + ADP. Functionally, essential for recycling GMP and indirectly, cGMP. The protein is Guanylate kinase of Bartonella quintana (strain Toulouse) (Rochalimaea quintana).